Here is a 709-residue protein sequence, read N- to C-terminus: Polyribonucleotide nucleotidyltransferase (709 aa).

Mg(2+)-binding residues include Asp486 and Asp492. The region spanning 553–612 (PRIHTIKINPDKIKDVIGKGGSVIRALTEETGTTIEIEDDGTVKIAATDGEKAKHAISRI) is the KH domain. One can recognise an S1 motif domain in the interval 622–690 (GRIYAGKVTR…RQGRVRLSIK (69 aa)).

The protein belongs to the polyribonucleotide nucleotidyltransferase family. In terms of assembly, component of the RNA degradosome, which is a multiprotein complex involved in RNA processing and mRNA degradation. Mg(2+) is required as a cofactor.

It is found in the cytoplasm. It carries out the reaction RNA(n+1) + phosphate = RNA(n) + a ribonucleoside 5'-diphosphate. Involved in mRNA degradation. Catalyzes the phosphorolysis of single-stranded polyribonucleotides processively in the 3'- to 5'-direction. The polypeptide is Polyribonucleotide nucleotidyltransferase (Photorhabdus luminescens (Xenorhabdus luminescens)).